A 940-amino-acid chain; its full sequence is Isoleucine--tRNA ligase (940 aa).

The 'HIGH' region signature appears at 58 to 68; it reads PYANGSIHIGH. Glutamate 564 is a binding site for L-isoleucyl-5'-AMP. A 'KMSKS' region motif is present at residues 605–609; that stretch reads KMSKS. Lysine 608 contributes to the ATP binding site. Residues cysteine 903, cysteine 906, cysteine 923, and cysteine 926 each coordinate Zn(2+).

This sequence belongs to the class-I aminoacyl-tRNA synthetase family. IleS type 1 subfamily. In terms of assembly, monomer. Zn(2+) serves as cofactor.

It is found in the cytoplasm. The catalysed reaction is tRNA(Ile) + L-isoleucine + ATP = L-isoleucyl-tRNA(Ile) + AMP + diphosphate. Catalyzes the attachment of isoleucine to tRNA(Ile). As IleRS can inadvertently accommodate and process structurally similar amino acids such as valine, to avoid such errors it has two additional distinct tRNA(Ile)-dependent editing activities. One activity is designated as 'pretransfer' editing and involves the hydrolysis of activated Val-AMP. The other activity is designated 'posttransfer' editing and involves deacylation of mischarged Val-tRNA(Ile). This is Isoleucine--tRNA ligase from Shewanella baltica (strain OS223).